Reading from the N-terminus, the 417-residue chain is D-galactonate dehydratase family member SeV_A0456 (417 aa).

2 residues coordinate substrate: Q43 and H127. The Proton donor/acceptor role is filled by Y158. D223 is a Mg(2+) binding site. The active-site Proton donor/acceptor is the H225. Mg(2+)-binding residues include E249 and E275. E275, R296, H325, D329, and E352 together coordinate substrate.

Belongs to the mandelate racemase/muconate lactonizing enzyme family. GalD subfamily. The cofactor is Mg(2+).

The catalysed reaction is D-gluconate = 2-dehydro-3-deoxy-D-gluconate + H2O. In terms of biological role, has low D-gluconate dehydratase activity (in vitro), suggesting that it has no significant role in D-gluconate degradation in vivo. Has no detectable activity with a panel of 70 other acid sugars (in vitro). This Salmonella virchow (strain SL491) protein is D-galactonate dehydratase family member SeV_A0456.